Consider the following 326-residue polypeptide: MNLPTKIFFTSFIFGFILSPYFIKFLKKISKNGQPIRLCSPENHLITKRNTPTMGGVVILTSSLLPILFWVQSTPEILLLVSITLSFALIGFIDDYLKLKANSYRGLSAKTKILIQFIVALVGMSVFKLYFTEDFTKTFLFKGIMIDFSYLYAPFAAFIVVGSSNAVNLTDGLDGLAATQIIASFVSLGLVAYMTRADISVILFCITFIGATLSFLWFNTHPAKIFMGDIGSLSIGAALGLTSVLIKREVLFAVIGVIFVIETLSVVIQVLYFKYTRFKHGKGKRIFLMTPIHHHFEKKGWSENEIVIKFLIITIVCSVFTVAFLL.

The next 10 helical transmembrane spans lie at 3–23, 51–71, 77–97, 113–133, 143–163, 175–195, 199–219, 225–245, 250–270, and 306–326; these read LPTKIFFTSFIFGFILSPYFI, TPTMGGVVILTSSLLPILFWV, ILLLVSITLSFALIGFIDDYL, ILIQFIVALVGMSVFKLYFTE, GIMIDFSYLYAPFAAFIVVGS, GLAATQIIASFVSLGLVAYMT, ISVILFCITFIGATLSFLWFN, IFMGDIGSLSIGAALGLTSVL, VLFAVIGVIFVIETLSVVIQV, and IVIKFLIITIVCSVFTVAFLL.

It belongs to the glycosyltransferase 4 family. MraY subfamily. Mg(2+) is required as a cofactor.

The protein resides in the cell membrane. It carries out the reaction UDP-N-acetyl-alpha-D-muramoyl-L-alanyl-gamma-D-glutamyl-meso-2,6-diaminopimeloyl-D-alanyl-D-alanine + di-trans,octa-cis-undecaprenyl phosphate = di-trans,octa-cis-undecaprenyl diphospho-N-acetyl-alpha-D-muramoyl-L-alanyl-D-glutamyl-meso-2,6-diaminopimeloyl-D-alanyl-D-alanine + UMP. Its pathway is cell wall biogenesis; peptidoglycan biosynthesis. Functionally, catalyzes the initial step of the lipid cycle reactions in the biosynthesis of the cell wall peptidoglycan: transfers peptidoglycan precursor phospho-MurNAc-pentapeptide from UDP-MurNAc-pentapeptide onto the lipid carrier undecaprenyl phosphate, yielding undecaprenyl-pyrophosphoryl-MurNAc-pentapeptide, known as lipid I. The sequence is that of Phospho-N-acetylmuramoyl-pentapeptide-transferase from Wolbachia sp. subsp. Brugia malayi (strain TRS).